The chain runs to 368 residues: tRNA N6-adenosine threonylcarbamoyltransferase (368 aa).

Fe cation is bound by residues histidine 108 and histidine 112. Substrate-binding positions include 149 to 153 (LVSGG), aspartate 183, glycine 196, aspartate 200, and asparagine 301. Position 329 (aspartate 329) interacts with Fe cation.

The protein belongs to the KAE1 / TsaD family. The cofactor is Fe(2+).

It localises to the cytoplasm. It carries out the reaction L-threonylcarbamoyladenylate + adenosine(37) in tRNA = N(6)-L-threonylcarbamoyladenosine(37) in tRNA + AMP + H(+). Required for the formation of a threonylcarbamoyl group on adenosine at position 37 (t(6)A37) in tRNAs that read codons beginning with adenine. Is involved in the transfer of the threonylcarbamoyl moiety of threonylcarbamoyl-AMP (TC-AMP) to the N6 group of A37, together with TsaE and TsaB. TsaD likely plays a direct catalytic role in this reaction. The chain is tRNA N6-adenosine threonylcarbamoyltransferase from Paenarthrobacter aurescens (strain TC1).